The chain runs to 435 residues: Cytochrome c oxidase subunit 3 (435 aa).

7 helical membrane passes run 70–90, 96–116, 132–152, 176–196, 325–345, 360–380, and 412–432; these read VAPL…FGVI, LLIA…SIIF, LVMG…SFFW, VYSY…SGAI, LYFT…EYFF, FLLT…IGII, and LFYW…IYWW.

It belongs to the cytochrome c oxidase subunit 3 family. Component of the cytochrome c oxidase (complex IV, CIV), a multisubunit enzyme composed of a catalytic core of 3 subunits and several supernumerary subunits. The complex exists as a monomer or a dimer and forms supercomplexes (SCs) in the inner mitochondrial membrane with ubiquinol-cytochrome c oxidoreductase (cytochrome b-c1 complex, complex III, CIII).

It localises to the mitochondrion inner membrane. It carries out the reaction 4 Fe(II)-[cytochrome c] + O2 + 8 H(+)(in) = 4 Fe(III)-[cytochrome c] + 2 H2O + 4 H(+)(out). Component of the cytochrome c oxidase, the last enzyme in the mitochondrial electron transport chain which drives oxidative phosphorylation. The respiratory chain contains 3 multisubunit complexes succinate dehydrogenase (complex II, CII), ubiquinol-cytochrome c oxidoreductase (cytochrome b-c1 complex, complex III, CIII) and cytochrome c oxidase (complex IV, CIV), that cooperate to transfer electrons derived from NADH and succinate to molecular oxygen, creating an electrochemical gradient over the inner membrane that drives transmembrane transport and the ATP synthase. Cytochrome c oxidase is the component of the respiratory chain that catalyzes the reduction of oxygen to water. Electrons originating from reduced cytochrome c in the intermembrane space (IMS) are transferred via the dinuclear copper A center (CU(A)) of subunit 2 and heme A of subunit 1 to the active site in subunit 1, a binuclear center (BNC) formed by heme A3 and copper B (CU(B)). The BNC reduces molecular oxygen to 2 water molecules using 4 electrons from cytochrome c in the IMS and 4 protons from the mitochondrial matrix. In Dictyostelium discoideum (Social amoeba), this protein is Cytochrome c oxidase subunit 3 (cox3).